The primary structure comprises 279 residues: Putative ABC transporter ATP-binding protein GSU3001 (279 aa).

Positions 1–237 constitute an ABC transporter domain; that stretch reads MRFSVDLKAY…PAEMESVKLR (237 aa). 36 to 43 contributes to the ATP binding site; it reads GSNGSGKT.

This sequence belongs to the ABC transporter superfamily.

It localises to the cell inner membrane. Probably part of an ABC transporter complex. Responsible for energy coupling to the transport system. The protein is Putative ABC transporter ATP-binding protein GSU3001 of Geobacter sulfurreducens (strain ATCC 51573 / DSM 12127 / PCA).